Reading from the N-terminus, the 35-residue chain is Photosystem II reaction center protein T (35 aa).

A helical membrane pass occupies residues 3 to 23; sequence ALVYTFLLVSTLGIIFFAIFF.

This sequence belongs to the PsbT family. As to quaternary structure, PSII is composed of 1 copy each of membrane proteins PsbA, PsbB, PsbC, PsbD, PsbE, PsbF, PsbH, PsbI, PsbJ, PsbK, PsbL, PsbM, PsbT, PsbY, PsbZ, Psb30/Ycf12, at least 3 peripheral proteins of the oxygen-evolving complex and a large number of cofactors. It forms dimeric complexes.

It localises to the plastid. The protein localises to the chloroplast thylakoid membrane. Functionally, found at the monomer-monomer interface of the photosystem II (PS II) dimer, plays a role in assembly and dimerization of PSII. PSII is a light-driven water plastoquinone oxidoreductase, using light energy to abstract electrons from H(2)O, generating a proton gradient subsequently used for ATP formation. The sequence is that of Photosystem II reaction center protein T from Amborella trichopoda.